The primary structure comprises 386 residues: NifS-like protein (386 aa).

Pyridoxal 5'-phosphate-binding positions include Ser-58–Glu-59 and Ser-184–Asn-186.

Belongs to the class-V pyridoxal-phosphate-dependent aminotransferase family. NifS/IscS subfamily. Requires pyridoxal 5'-phosphate as cofactor.

It is found in the virion. In Ornithodoros (relapsing fever ticks), this protein is NifS-like protein.